The following is a 559-amino-acid chain: YTH domain-containing family protein 1 (559 aa).

Residues 1–49 (MSATSVDPQRTKGQDNKVQNGSLHQKDAVHDNDFEPYLSGQSNPSNSYP) are disordered. N-acetylserine is present on Ser2. Over residues 24–33 (HQKDAVHDND) the composition is skewed to basic and acidic residues. Phosphoserine is present on Ser182. Residues 239 to 365 (SKPAKPQPKM…PTSAPSVESH (127 aa)) form a disordered region. Composition is skewed to low complexity over residues 279–305 (PAPK…AQPL) and 314–326 (QPQY…PLQP). The segment covering 343–361 (GANSDSNSVGNAQPTSAPS) has biased composition (polar residues). The YTH domain occupies 389–523 (GRVFIIKSYS…EKAKQVLKII (135 aa)). RNA contacts are provided by residues 395 to 397 (KSY), Asp401, 411 to 412 (WC), Asn441, Trp465, and Trp470.

It belongs to the YTHDF family. YTHDF1 subfamily. In terms of assembly, interacts with CNOT1; promoting recruitment of the CCR4-NOT complex. Interacts with ribosomes. Interacts with eIF3 (EIF3A or EIF3B). Interacts with YTHDF3. Post-translationally, ubiquitinated by the CUL7-FBXW8 E3 ligase complex leading to degradation. Deubiquitinated and stabilized by USP5 by removing 'Lys-11'-linked polyubiquitination. In brain, preferentially expressed in the hippocampus.

Its subcellular location is the cytoplasm. It localises to the P-body. The protein localises to the stress granule. In terms of biological role, specifically recognizes and binds N6-methyladenosine (m6A)-containing mRNAs, and regulates their stability. M6A is a modification present at internal sites of mRNAs and some non-coding RNAs and plays a role in mRNA stability and processing. Acts as a regulator of mRNA stability by promoting degradation of m6A-containing mRNAs via interaction with the CCR4-NOT complex. The YTHDF paralogs (YTHDF1, YTHDF2 and YTHDF3) share m6A-containing mRNAs targets and act redundantly to mediate mRNA degradation and cellular differentiation. Required to facilitate learning and memory formation in the hippocampus by binding to m6A-containing neuronal mRNAs. Acts as a regulator of axon guidance by binding to m6A-containing ROBO3 transcripts. Acts as a negative regulator of antigen cross-presentation in myeloid dendritic cells. In the context of tumorigenesis, negative regulation of antigen cross-presentation limits the anti-tumor response by reducing efficiency of tumor-antigen cross-presentation. Promotes formation of phase-separated membraneless compartments, such as P-bodies or stress granules, by undergoing liquid-liquid phase separation upon binding to mRNAs containing multiple m6A-modified residues: polymethylated mRNAs act as a multivalent scaffold for the binding of YTHDF proteins, juxtaposing their disordered regions and thereby leading to phase separation. The resulting mRNA-YTHDF complexes then partition into different endogenous phase-separated membraneless compartments, such as P-bodies, stress granules or neuronal RNA granules. The sequence is that of YTH domain-containing family protein 1 from Mus musculus (Mouse).